The following is a 391-amino-acid chain: Ribosomal RNA small subunit methyltransferase H (391 aa).

The tract at residues 1-23 (MDVDVQDDVQGRAGEGAEERAHD) is disordered. S-adenosyl-L-methionine contacts are provided by residues 59–61 (GGH), Asp78, Leu112, Asp126, and Gln133. The disordered stretch occupies residues 284-391 (SSSSAPPDLP…EPGATVERTP (108 aa)). Positions 368–380 (RTQEFETHPHLEP) are enriched in basic and acidic residues.

This sequence belongs to the methyltransferase superfamily. RsmH family.

It is found in the cytoplasm. It catalyses the reaction cytidine(1402) in 16S rRNA + S-adenosyl-L-methionine = N(4)-methylcytidine(1402) in 16S rRNA + S-adenosyl-L-homocysteine + H(+). Functionally, specifically methylates the N4 position of cytidine in position 1402 (C1402) of 16S rRNA. The protein is Ribosomal RNA small subunit methyltransferase H of Kineococcus radiotolerans (strain ATCC BAA-149 / DSM 14245 / SRS30216).